The primary structure comprises 82 residues: Conotoxin Tx6.6 (82 aa).

Residues 1–19 (MKLTCVMIVAVLFLTAWTL) form the signal peptide. The propeptide occupies 20–51 (VMADDSNNGLANLFSKLRDEMEDPEGSKLEKK). Cystine bridges form between Cys53–Cys71, Cys60–Cys76, and Cys70–Cys81. At Ala82 the chain carries Alanine amide; partial.

It belongs to the O1 superfamily. As to expression, expressed by the venom duct.

The protein localises to the secreted. In terms of biological role, omega-conotoxins act at presynaptic membranes, they bind and block voltage-gated calcium channels (Cav). The protein is Conotoxin Tx6.6 of Conus textile (Cloth-of-gold cone).